We begin with the raw amino-acid sequence, 172 residues long: L-methionine sulfoximine/L-methionine sulfone acetyltransferase (172 aa).

In terms of domain architecture, N-acetyltransferase spans 3 to 166 (ASIRDAGVAD…DLTFMQLNLD (164 aa)). Residues 75 to 77 (RPF) and 85 to 87 (EHS) each bind substrate. Acetyl-CoA-binding positions include 88–90 (VYV), 96–101 (GKGLGV), and asparagine 127.

Homodimer.

It carries out the reaction L-methionine sulfoximine + acetyl-CoA = N-acetyl-L-methionine sulfoximine + CoA + H(+). The catalysed reaction is L-methionine sulfone + acetyl-CoA = N-acetyl-L-methionine sulfone + CoA + H(+). In terms of biological role, plays a role in the resistance against the toxic effects of L-methionine sulfoximine (MSX), a rare amino acid, which inhibits glutamine synthetase (GlnA). Catalyzes the acetylation of L-methionine sulfoximine (MSX). It can also use L-methionine sulfone (MSO). The polypeptide is L-methionine sulfoximine/L-methionine sulfone acetyltransferase (Pseudomonas paraeruginosa (strain DSM 24068 / PA7) (Pseudomonas aeruginosa (strain PA7))).